The following is a 356-amino-acid chain: Nicotinate-nucleotide--dimethylbenzimidazole phosphoribosyltransferase (356 aa).

The active-site Proton acceptor is the E317.

This sequence belongs to the CobT family. In terms of assembly, homodimer.

The enzyme catalyses 5,6-dimethylbenzimidazole + nicotinate beta-D-ribonucleotide = alpha-ribazole 5'-phosphate + nicotinate + H(+). Its pathway is nucleoside biosynthesis; alpha-ribazole biosynthesis; alpha-ribazole from 5,6-dimethylbenzimidazole: step 1/2. Catalyzes the synthesis of alpha-ribazole-5'-phosphate from nicotinate mononucleotide (NAMN) and 5,6-dimethylbenzimidazole (DMB). This chain is Nicotinate-nucleotide--dimethylbenzimidazole phosphoribosyltransferase, found in Salmonella dublin (strain CT_02021853).